The following is a 233-amino-acid chain: Ribosome maturation factor RimP (233 aa).

The span at 167–179 (RGKAAEREKKRDL) shows a compositional bias: basic and acidic residues. Residues 167–233 (RGKAAEREKK…RARRGEIDPD (67 aa)) are disordered. The span at 187-196 (PHAKPAAQAK) shows a compositional bias: low complexity. Basic and acidic residues predominate over residues 220–233 (LAADRARRGEIDPD).

It belongs to the RimP family.

The protein resides in the cytoplasm. Its function is as follows. Required for maturation of 30S ribosomal subunits. This Bradyrhizobium sp. (strain ORS 278) protein is Ribosome maturation factor RimP.